Reading from the N-terminus, the 334-residue chain is Ketol-acid reductoisomerase (NADP(+)) (334 aa).

The KARI N-terminal Rossmann domain maps to 1–181 (MTTVYYDQDV…GATRAGVIET (181 aa)). NADP(+) is bound by residues 25–28 (YGSQ), R48, S52, and 82–85 (DEIQ). Residue H107 is part of the active site. G133 serves as a coordination point for NADP(+). One can recognise a KARI C-terminal knotted domain in the interval 182-327 (TFKEETETDL…RELREMMPFI (146 aa)). 4 residues coordinate Mg(2+): D190, E194, E226, and E230. A substrate-binding site is contributed by S251.

Belongs to the ketol-acid reductoisomerase family. Mg(2+) is required as a cofactor.

The enzyme catalyses (2R)-2,3-dihydroxy-3-methylbutanoate + NADP(+) = (2S)-2-acetolactate + NADPH + H(+). It carries out the reaction (2R,3R)-2,3-dihydroxy-3-methylpentanoate + NADP(+) = (S)-2-ethyl-2-hydroxy-3-oxobutanoate + NADPH + H(+). Its pathway is amino-acid biosynthesis; L-isoleucine biosynthesis; L-isoleucine from 2-oxobutanoate: step 2/4. The protein operates within amino-acid biosynthesis; L-valine biosynthesis; L-valine from pyruvate: step 2/4. In terms of biological role, involved in the biosynthesis of branched-chain amino acids (BCAA). Catalyzes an alkyl-migration followed by a ketol-acid reduction of (S)-2-acetolactate (S2AL) to yield (R)-2,3-dihydroxy-isovalerate. In the isomerase reaction, S2AL is rearranged via a Mg-dependent methyl migration to produce 3-hydroxy-3-methyl-2-ketobutyrate (HMKB). In the reductase reaction, this 2-ketoacid undergoes a metal-dependent reduction by NADPH to yield (R)-2,3-dihydroxy-isovalerate. This chain is Ketol-acid reductoisomerase (NADP(+)), found in Staphylococcus aureus (strain Mu3 / ATCC 700698).